The sequence spans 400 residues: Elongation factor Tu (400 aa).

The 201-residue stretch at lysine 10 to arginine 210 folds into the tr-type G domain. The interval glycine 19–threonine 26 is G1. Glycine 19 to threonine 26 is a binding site for GTP. Threonine 26 contributes to the Mg(2+) binding site. The interval glycine 60–alanine 64 is G2. Positions aspartate 81 to glycine 84 are G3. Residues aspartate 81–histidine 85 and asparagine 136–aspartate 139 contribute to the GTP site. Positions asparagine 136–aspartate 139 are G4. Positions serine 174 to isoleucine 176 are G5.

The protein belongs to the TRAFAC class translation factor GTPase superfamily. Classic translation factor GTPase family. EF-Tu/EF-1A subfamily. In terms of assembly, monomer.

It is found in the cytoplasm. The catalysed reaction is GTP + H2O = GDP + phosphate + H(+). GTP hydrolase that promotes the GTP-dependent binding of aminoacyl-tRNA to the A-site of ribosomes during protein biosynthesis. This Dehalococcoides mccartyi (strain CBDB1) protein is Elongation factor Tu.